Here is a 440-residue protein sequence, read N- to C-terminus: Methylthioribose-1-phosphate isomerase (440 aa).

Asp-285 (proton donor) is an active-site residue.

The protein belongs to the eIF-2B alpha/beta/delta subunits family. MtnA subfamily.

It localises to the cytoplasm. Its subcellular location is the nucleus. It carries out the reaction 5-(methylsulfanyl)-alpha-D-ribose 1-phosphate = 5-(methylsulfanyl)-D-ribulose 1-phosphate. It participates in amino-acid biosynthesis; L-methionine biosynthesis via salvage pathway; L-methionine from S-methyl-5-thio-alpha-D-ribose 1-phosphate: step 1/6. Its function is as follows. Catalyzes the interconversion of methylthioribose-1-phosphate (MTR-1-P) into methylthioribulose-1-phosphate (MTRu-1-P). The polypeptide is Methylthioribose-1-phosphate isomerase (mri1) (Botryotinia fuckeliana (strain B05.10) (Noble rot fungus)).